The primary structure comprises 308 residues: N-acetylmuramic acid 6-phosphate etherase (308 aa).

Residues T59 to K222 form the SIS domain. The active-site Proton donor is E87. Residue E118 is part of the active site.

This sequence belongs to the GCKR-like family. MurNAc-6-P etherase subfamily. As to quaternary structure, homodimer.

The catalysed reaction is N-acetyl-D-muramate 6-phosphate + H2O = N-acetyl-D-glucosamine 6-phosphate + (R)-lactate. It participates in amino-sugar metabolism; N-acetylmuramate degradation. Specifically catalyzes the cleavage of the D-lactyl ether substituent of MurNAc 6-phosphate, producing GlcNAc 6-phosphate and D-lactate. The sequence is that of N-acetylmuramic acid 6-phosphate etherase from Nostoc punctiforme (strain ATCC 29133 / PCC 73102).